A 194-amino-acid chain; its full sequence is Fe/S biogenesis protein NfuA (194 aa).

[4Fe-4S] cluster is bound by residues Cys152 and Cys155.

This sequence belongs to the NfuA family. Homodimer. It depends on [4Fe-4S] cluster as a cofactor.

In terms of biological role, involved in iron-sulfur cluster biogenesis. Binds a 4Fe-4S cluster, can transfer this cluster to apoproteins, and thereby intervenes in the maturation of Fe/S proteins. Could also act as a scaffold/chaperone for damaged Fe/S proteins. The chain is Fe/S biogenesis protein NfuA from Ectopseudomonas mendocina (strain ymp) (Pseudomonas mendocina).